The following is a 314-amino-acid chain: Transcription factor DICHOTOMA (314 aa).

In terms of domain architecture, TCP spans 87–145 (KKDRHSKINRPQGPRDRRVRLSIGIARKFFDLQEMLGFDKPSKTLDWLLTKSKEAIKEL). The 18-residue stretch at 201–218 (KESRAKARARARERTKEK) folds into the R domain.

It is found in the nucleus. Transcription regulator involved in the dorsovental asymmetry of flowers. Promotes dorsal identity. In Antirrhinum majus (Garden snapdragon), this protein is Transcription factor DICHOTOMA (DICH).